Here is a 428-residue protein sequence, read N- to C-terminus: Cell division protein DamX (428 aa).

A disordered region spans residues 1-99; sequence MDEFKPEDEL…KRKKAASKPA (99 aa). The Cytoplasmic segment spans residues 1–103; it reads MDEFKPEDEL…AASKPASRQY (103 aa). 2 stretches are compositionally biased toward basic and acidic residues: residues 7–36 and 50–64; these read EDEL…ERGE and DDRR…RNEE. Residues 55–87 adopt a coiled-coil conformation; that stretch reads TRAQKERNEEPEIEEEIDESEDETVDEERVERR. Residues 65–82 show a composition bias toward acidic residues; sequence PEIEEEIDESEDETVDEE. Over residues 86–95 the composition is skewed to basic residues; the sequence is RRPRKRKKAA. The chain crosses the membrane as a helical span at residues 104–124; sequence MMMGVGILVLLLLIIGIGSAL. At 125–428 the chain is on the periplasmic side; the sequence is KAPSTTSSDQ…PLRQVQADLK (304 aa). Disordered stretches follow at residues 149 to 190 and 226 to 344; these read TDQA…VATD and EPAT…KSAP. Residues 236–257 show a composition bias toward polar residues; it reads GNASRDTAKTQTAERPSTTRPA. Residues 288-334 are compositionally biased toward low complexity; that stretch reads PAAPVASTKAPAATSTPAPKETATTAPVQTASPAQTTATPAAGAKTA. Positions 342-419 constitute an SPOR domain; sequence SAPSSHYTLQ…VQAKNPWAKP (78 aa).

Belongs to the DamX family. In terms of assembly, interacts in vitro with multiple Fts proteins, including FtsQ and FtsN.

The protein localises to the cell inner membrane. Functionally, non-essential cell division protein. This Escherichia coli (strain K12) protein is Cell division protein DamX.